An 85-amino-acid chain; its full sequence is METVVGLTAIAVALLIGLGALGTAIGFGLLGGKFLEGAARQPEMVPMLQVKMFIVAGLLDAVTMIGVGIALFFTFANPFVGQLAG.

The next 2 membrane-spanning stretches (helical) occupy residues 10–30 (IAVA…FGLL) and 53–73 (FIVA…ALFF).

It belongs to the ATPase C chain family. F-type ATPases have 2 components, F(1) - the catalytic core - and F(0) - the membrane proton channel. F(1) has five subunits: alpha(3), beta(3), gamma(1), delta(1), epsilon(1). F(0) has three main subunits: a(1), b(2) and c(10-14). The alpha and beta chains form an alternating ring which encloses part of the gamma chain. F(1) is attached to F(0) by a central stalk formed by the gamma and epsilon chains, while a peripheral stalk is formed by the delta and b chains.

The protein resides in the cell inner membrane. In terms of biological role, f(1)F(0) ATP synthase produces ATP from ADP in the presence of a proton or sodium gradient. F-type ATPases consist of two structural domains, F(1) containing the extramembraneous catalytic core and F(0) containing the membrane proton channel, linked together by a central stalk and a peripheral stalk. During catalysis, ATP synthesis in the catalytic domain of F(1) is coupled via a rotary mechanism of the central stalk subunits to proton translocation. Key component of the F(0) channel; it plays a direct role in translocation across the membrane. A homomeric c-ring of between 10-14 subunits forms the central stalk rotor element with the F(1) delta and epsilon subunits. The protein is ATP synthase subunit c of Pseudomonas syringae pv. syringae (strain B728a).